Consider the following 324-residue polypeptide: tRNA uridine(34) hydroxylase (324 aa).

Residues 127–221 (QQEETIVIDA…YGKDPEVQGE (95 aa)) enclose the Rhodanese domain. Cysteine 181 functions as the Cysteine persulfide intermediate in the catalytic mechanism.

This sequence belongs to the TrhO family.

It catalyses the reaction uridine(34) in tRNA + AH2 + O2 = 5-hydroxyuridine(34) in tRNA + A + H2O. Its function is as follows. Catalyzes oxygen-dependent 5-hydroxyuridine (ho5U) modification at position 34 in tRNAs. This Bacillus cytotoxicus (strain DSM 22905 / CIP 110041 / 391-98 / NVH 391-98) protein is tRNA uridine(34) hydroxylase.